A 404-amino-acid polypeptide reads, in one-letter code: Peroxisomal biogenesis factor 9 (404 aa).

A run of 3 helical transmembrane segments spans residues 73–93, 94–114, and 149–169; these read FLFLGVTLFLFLSLLQQSLVF, LLGVFLRLVQLVGHFLLLLMG, and FGLDVVTAIVVIGDNELFQVV. The tract at residues 180 to 214 is disordered; that stretch reads DGQRSQQSQNSGMNVASSSRGRHQLVPDRPGSQLS. Residues 181–198 are compositionally biased toward polar residues; it reads GQRSQQSQNSGMNVASSS. A helical transmembrane segment spans residues 349 to 369; sequence FFVGLVSWIVDETAACVVFCL.

It localises to the peroxisome membrane. Essential for the import of peroxisomal matrix proteins. The chain is Peroxisomal biogenesis factor 9 (PEX9) from Yarrowia lipolytica (strain CLIB 122 / E 150) (Yeast).